A 160-amino-acid polypeptide reads, in one-letter code: Endoribonuclease YbeY (160 aa).

Residues His121, His125, and His131 each contribute to the Zn(2+) site.

Belongs to the endoribonuclease YbeY family. It depends on Zn(2+) as a cofactor.

The protein localises to the cytoplasm. Single strand-specific metallo-endoribonuclease involved in late-stage 70S ribosome quality control and in maturation of the 3' terminus of the 16S rRNA. The polypeptide is Endoribonuclease YbeY (Hydrogenovibrio crunogenus (strain DSM 25203 / XCL-2) (Thiomicrospira crunogena)).